Here is a 489-residue protein sequence, read N- to C-terminus: uncharacterized protein (489 aa).

Positions 2–84 constitute a 2Fe-2S ferredoxin-type domain; sequence IKITVKRFNG…GMIIEPLRGF (83 aa). Residues Cys-48, Cys-53, Cys-56, and Cys-68 each coordinate [2Fe-2S] cluster. 4Fe-4S ferredoxin-type domains follow at residues 123–155 and 177–205; these read KYVE…YPGP and TAYF…IVHR. 8 residues coordinate [4Fe-4S] cluster: Cys-134, Cys-137, Cys-140, Cys-144, Cys-186, Cys-189, Cys-192, and Cys-196.

This sequence belongs to the succinate dehydrogenase/fumarate reductase iron-sulfur protein family.

This is an uncharacterized protein from Methanocaldococcus jannaschii (strain ATCC 43067 / DSM 2661 / JAL-1 / JCM 10045 / NBRC 100440) (Methanococcus jannaschii).